We begin with the raw amino-acid sequence, 244 residues long: MATGGKKSAGRTTGSGPAGGSRNLTVKVKTAKRRKLSSTLWLQRQLNDPYVHEAKRLGYRSRAAFKMIQLDERFHILKPGLRVVDLGAAPGGWTQVAVEKVGALKPKGGGKVVGMDILEWDPLPGAITLQGDFLADDAPDRLKEALGGPADVVLSDMAAPTTGHPSTDHLRIIGLVEVALHFALEVLTPGGTFVAKVFQGGTEKTLLDQLKKNFTTVRHAKPPASRQGSAETYVVATGFRGSSE.

The tract at residues 1-23 is disordered; sequence MATGGKKSAGRTTGSGPAGGSRN. Positions 91, 93, 116, 132, and 156 each coordinate S-adenosyl-L-methionine. The Proton acceptor role is filled by Lys196.

It belongs to the class I-like SAM-binding methyltransferase superfamily. RNA methyltransferase RlmE family.

The protein resides in the cytoplasm. The catalysed reaction is uridine(2552) in 23S rRNA + S-adenosyl-L-methionine = 2'-O-methyluridine(2552) in 23S rRNA + S-adenosyl-L-homocysteine + H(+). In terms of biological role, specifically methylates the uridine in position 2552 of 23S rRNA at the 2'-O position of the ribose in the fully assembled 50S ribosomal subunit. The chain is Ribosomal RNA large subunit methyltransferase E from Paramagnetospirillum magneticum (strain ATCC 700264 / AMB-1) (Magnetospirillum magneticum).